The chain runs to 889 residues: Cytoplasmic aconitate hydratase (889 aa).

Substrate is bound by residues Gln86 and Asp205–His207. [4Fe-4S] cluster-binding residues include Cys437, Cys503, and Cys506. Residues Arg536, Arg541, Arg699, and Ser779–Arg780 each bind substrate.

This sequence belongs to the aconitase/IPM isomerase family. In terms of assembly, interacts (when associated with the 4Fe-4S) with FBXL5. Interacts with frataxin(81-210). The cofactor is [4Fe-4S] cluster.

Its subcellular location is the cytoplasm. The protein resides in the cytosol. It catalyses the reaction citrate = D-threo-isocitrate. Functionally, bifunctional iron sensor that switches between 2 activities depending on iron availability. Iron deprivation, promotes its mRNA binding activity through which it regulates the expression of genes involved in iron uptake, sequestration and utilization. Binds to iron-responsive elements (IRES) in the untranslated region of target mRNAs preventing for instance the translation of ferritin and aminolevulinic acid synthase and stabilizing the transferrin receptor mRNA. In terms of biological role, conversely, when cellular iron levels are high, binds a 4Fe-4S cluster which precludes RNA binding activity and promotes the aconitase activity, the isomerization of citrate to isocitrate via cis-aconitate. The sequence is that of Cytoplasmic aconitate hydratase (Aco1) from Rattus norvegicus (Rat).